The sequence spans 423 residues: Phthiocerol/phthiodiolone dimycocerosyl transferase (423 aa).

Residue His-125 is the Proton acceptor of the active site.

The protein belongs to the acyltransferase PapA5 family. Monomer. Interacts directly with the acyl carrier protein (ACP) domain of the mycocerosic acid synthase (mas) protein.

It catalyses the reaction 2 a mycocerosyl-[mycocerosic acid synthase] + a phthiocerol = a dimycocerosyl phthiocerol + 2 holo-[mycocerosic acid synthase].. The catalysed reaction is 2 a mycocerosyl-[mycocerosic acid synthase] + a phthiodiolone = a dimycocerosyl phthiodiolone + 2 holo-[mycocerosic acid synthase].. The enzyme catalyses 2 a mycocerosyl-[mycocerosic acid synthase] + a phenolphthiocerol = a dimycocerosyl phenolphthiocerol + 2 holo-[mycocerosic acid synthase].. Catalyzes diesterification of phthiocerol, phthiodiolone, and phenolphthiocerol with mycocerosic acids, the final step in the phthiocerol, phthiodiolone and phenolphthiocerol dimycocerosate esters (PDIM) synthesis. Can directly transfer the mycocerosate bound to the mycocerosic acid synthase (mas) onto the substrate alcohols. The polypeptide is Phthiocerol/phthiodiolone dimycocerosyl transferase (papA5) (Mycobacterium leprae (strain TN)).